A 315-amino-acid polypeptide reads, in one-letter code: 4-diphosphocytidyl-2-C-methyl-D-erythritol kinase (315 aa).

Residue K26 is part of the active site. 111–121 (PLAGGLAGGSA) lines the ATP pocket. D153 is a catalytic residue.

Belongs to the GHMP kinase family. IspE subfamily.

The catalysed reaction is 4-CDP-2-C-methyl-D-erythritol + ATP = 4-CDP-2-C-methyl-D-erythritol 2-phosphate + ADP + H(+). The protein operates within isoprenoid biosynthesis; isopentenyl diphosphate biosynthesis via DXP pathway; isopentenyl diphosphate from 1-deoxy-D-xylulose 5-phosphate: step 3/6. Functionally, catalyzes the phosphorylation of the position 2 hydroxy group of 4-diphosphocytidyl-2C-methyl-D-erythritol. The protein is 4-diphosphocytidyl-2-C-methyl-D-erythritol kinase of Salinispora tropica (strain ATCC BAA-916 / DSM 44818 / JCM 13857 / NBRC 105044 / CNB-440).